A 426-amino-acid polypeptide reads, in one-letter code: Alpha/beta hydrolase pydG (426 aa).

The protein belongs to the AB hydrolase superfamily. As to quaternary structure, homodimer.

Its pathway is mycotoxin biosynthesis. Functionally, alpha/beta hydrolasee; part of the gene cluster that mediates the biosynthesis of pyrrocidines, fungal natural products containing a macrocyclic para-cyclophane connected to a decahydrofluorene ring system that show potent antibiotic activities toward Gram-negative bacteria. Within the pathway, pydG catalyzes the Knoevenagel condensation that affords the 3-pyrrolin-2-one ring, using as substrate the polyketide-tyrosyl acyl thioester product of pydA. The pathway begins with the PKS-NRPS pydA which, with the help of the trans-enoyl reductase pydC, synthesizes the polyketide-tyrosyl acyl thioester product which can be reductively off-loaded by the terminal reductase (R) domain in pydA. The alpha/beta hydrolase pydG is then required to catalyze the subsequent Knoevenagel condensation that affords the 3-pyrrolin-2-one ring, whereas the four proteins pydB, pydE, pydX and pydZ then function synergistically to form the cyclophane. PydB and the membrane-bound pydX and pydZ are lipid-binding proteins that can sequester and mold the pdyG product into the inverse S-shape. Binding of the medium chain reductase pydE to the complex would trigger the cascade oxidative cyclization. PydY is involved in the Diels-Alder cycloaddition that forms the decahydrofluorene core. Additional non-enzymatic hydroxylation yields pyrrocidine A2 which can be further reduced into pyrrocidine B by an endogenous reductase. This chain is Alpha/beta hydrolase pydG, found in Acremonium sp.